The following is a 132-amino-acid chain: Large-conductance mechanosensitive channel (132 aa).

Transmembrane regions (helical) follow at residues 11–31 (FISR…GAFG) and 75–95 (GSFL…FLLV).

Belongs to the MscL family. In terms of assembly, homopentamer.

The protein localises to the cell inner membrane. Its function is as follows. Channel that opens in response to stretch forces in the membrane lipid bilayer. May participate in the regulation of osmotic pressure changes within the cell. This chain is Large-conductance mechanosensitive channel, found in Synechococcus sp. (strain JA-2-3B'a(2-13)) (Cyanobacteria bacterium Yellowstone B-Prime).